A 224-amino-acid chain; its full sequence is Cytidylate kinase (224 aa).

Residue 11-19 (GPAAAGKST) coordinates ATP.

Belongs to the cytidylate kinase family. Type 1 subfamily.

Its subcellular location is the cytoplasm. It catalyses the reaction CMP + ATP = CDP + ADP. It carries out the reaction dCMP + ATP = dCDP + ADP. This chain is Cytidylate kinase, found in Listeria monocytogenes serotype 4b (strain CLIP80459).